The primary structure comprises 303 residues: Methionyl-tRNA formyltransferase (303 aa).

111–114 (SLLP) is a (6S)-5,6,7,8-tetrahydrofolate binding site.

It belongs to the Fmt family.

It catalyses the reaction L-methionyl-tRNA(fMet) + (6R)-10-formyltetrahydrofolate = N-formyl-L-methionyl-tRNA(fMet) + (6S)-5,6,7,8-tetrahydrofolate + H(+). In terms of biological role, attaches a formyl group to the free amino group of methionyl-tRNA(fMet). The formyl group appears to play a dual role in the initiator identity of N-formylmethionyl-tRNA by promoting its recognition by IF2 and preventing the misappropriation of this tRNA by the elongation apparatus. In Ehrlichia canis (strain Jake), this protein is Methionyl-tRNA formyltransferase.